The primary structure comprises 104 residues: Nucleoid-associated protein OB0030 (104 aa).

Residues 1–23 are disordered; sequence MKGNMNNMMKQMQKMQKKMMQAQ.

This sequence belongs to the YbaB/EbfC family. As to quaternary structure, homodimer.

It localises to the cytoplasm. It is found in the nucleoid. Its function is as follows. Binds to DNA and alters its conformation. May be involved in regulation of gene expression, nucleoid organization and DNA protection. This is Nucleoid-associated protein OB0030 from Oceanobacillus iheyensis (strain DSM 14371 / CIP 107618 / JCM 11309 / KCTC 3954 / HTE831).